We begin with the raw amino-acid sequence, 158 residues long: MSRRNISKKRFPEADSTYNSYLVSLLITRILKSGKKNLAQNIVNAAFEIIKVKTNEDPLVVFERAIRNASPVVEVKARRIGGSTYQVPVEVSGFRATNLSLRWIIQYSRQRVGRTMSIKLANEIIDTANDIGNTIKKKEETHKMQMPIKHLHIFVINY.

The protein belongs to the universal ribosomal protein uS7 family. As to quaternary structure, part of the 30S ribosomal subunit.

Its subcellular location is the plastid. It localises to the chloroplast. Functionally, one of the primary rRNA binding proteins, it binds directly to 16S rRNA where it nucleates assembly of the head domain of the 30S subunit. The sequence is that of Small ribosomal subunit protein uS7c (rps7) from Trieres chinensis (Marine centric diatom).